A 519-amino-acid chain; its full sequence is Acetylcholine receptor subunit beta-like 2 (519 aa).

A signal peptide spans 1-18 (MWHWSLLCVFLLVPLANS). Residues 19–244 (TAPISFEANP…ITFKLTMRRK (226 aa)) lie on the Extracellular side of the membrane. Asn-50 carries N-linked (GlcNAc...) asparagine glycosylation. Residues Cys-154 and Cys-168 are joined by a disulfide bond. The next 3 membrane-spanning stretches (helical) occupy residues 245–269 (TLFYTVNLIVPCVALTFLTVLVFYL), 277–295 (VTLCISILVSLTVFFLLLA), and 311–332 (YLLFTMILVSLSVWTTVCVLNI). At 333 to 462 (HFRSPSTHNM…WKFVSMVLDR (130 aa)) the chain is on the cytoplasmic side. Residues 463-481 (FFLWLFTLSCVFGTLAIIC) traverse the membrane as a helical segment.

Belongs to the ligand-gated ion channel (TC 1.A.9) family. Acetylcholine receptor (TC 1.A.9.1) subfamily. CNS in embryos.

Its subcellular location is the postsynaptic cell membrane. It localises to the cell membrane. In terms of biological role, after binding acetylcholine, the AChR responds by an extensive change in conformation that affects all subunits and leads to opening of an ion-conducting channel across the plasma membrane. The chain is Acetylcholine receptor subunit beta-like 2 (nAChRbeta2) from Drosophila melanogaster (Fruit fly).